A 130-amino-acid chain; its full sequence is MEAILMIGVITLCVIFLLSGRNNKKIQEARELEDYLEDLNQRIAQRTQILSELNEVITNRSVDKSVNMSACEIAVLDLYEQSNIRIPSDIIEDMVNQRLQTEQDVLNYIETQRTYWKLENQKKLYRGSLK.

The chain crosses the membrane as a helical span at residues 1–20; sequence MEAILMIGVITLCVIFLLSG. Positions 18-57 form a coiled coil; that stretch reads LSGRNNKKIQEARELEDYLEDLNQRIAQRTQILSELNEVI. Positions 70–130 are DNA-binding; that stretch reads ACEIAVLDLY…QKKLYRGSLK (61 aa).

Belongs to the phi29likevirus gp16.7 family. As to quaternary structure, homodimer; homooligomer. Interacts with DNA; one dsDNA binding subunit is constituted by three p16.7 dimers.

It localises to the host cell membrane. Its function is as follows. Binds to the long stretches of ssDNA of the viral DNA replication intermediates created during the protein-primed mechanism of replication of the viral genome and attaches the viral DNA to the membrane of the infected cells. Required for the redistribution of replicating viral DNA from the initial replication site to membrane-associated sites surrounding the nucleoid. Required for the second pull step of DNA ejection. This chain is DNA replication protein 16.7 (16.7), found in Bacillus subtilis (Bacteriophage PZA).